A 204-amino-acid polypeptide reads, in one-letter code: Serotonin N-acetyltransferase (204 aa).

Position 28 is a phosphothreonine; by PKA (Thr28). One can recognise an N-acetyltransferase domain in the interval 32 to 193 (SEFRCLTPED…SFTELHCSLQ (162 aa)). Leu121 contributes to the substrate binding site. Acetyl-CoA-binding positions include 121–123 (LAV) and 129–134 (QQGRGP). A substrate-binding site is contributed by Met156. Residue 165–167 (YER) coordinates acetyl-CoA. Ser202 carries the post-translational modification Phosphoserine.

Belongs to the acetyltransferase family. AANAT subfamily. As to quaternary structure, monomer. Interacts with several 14-3-3 proteins, including YWHAB, YWHAE, YWHAG and YWHAZ, preferentially when phosphorylated at Thr-28. Phosphorylation on Ser-202 also allows binding to YWHAZ, but with lower affinity. The interaction with YWHAZ considerably increases affinity for arylalkylamines and acetyl-CoA and protects the enzyme from dephosphorylation and proteasomal degradation. It may also prevent thiol-dependent inactivation. CAMP-dependent phosphorylation regulates AANAT activity by promoting interaction with 14-3-3 proteins. Phosphorylation levels exhibit night/day variations, with an increase during nighttime. Highly expressed in pineal gland and in the photoreceptor outer segments in the retina. Expressed at about 100-fold lower levels in the pituitary gland and testis. Not detected in other tissues.

Its subcellular location is the cytoplasm. It catalyses the reaction a 2-arylethylamine + acetyl-CoA = an N-acetyl-2-arylethylamine + CoA + H(+). Its pathway is aromatic compound metabolism; melatonin biosynthesis; melatonin from serotonin: step 1/2. Controls the night/day rhythm of melatonin production in the pineal gland. Catalyzes the N-acetylation of serotonin into N-acetylserotonin, the penultimate step in the synthesis of melatonin. In Macaca mulatta (Rhesus macaque), this protein is Serotonin N-acetyltransferase (AANAT).